Here is a 1113-residue protein sequence, read N- to C-terminus: Translation initiation factor IF-2 (1113 aa).

Polar residues-rich tracts occupy residues 56-72 (QSNQ…SSKE), 129-139 (KANTSNQSKGV), 162-187 (LENN…TQLV), and 194-205 (TKNNEPPQQKTS). Disordered regions lie at residues 56–446 (QSNQ…IGEN) and 470–504 (LARP…RQRR). Residues 248-265 (PVQPRTQNNQNRQRIPNK) show a composition bias toward low complexity. Residues 415–429 (RRSDWDDAAKLEALR) show a composition bias toward basic and acidic residues. Composition is skewed to basic residues over residues 474-483 (AKPKSTKKSN) and 490-504 (TRKR…RQRR). Residues 605-777 (RRPPVVTVMG…VLLVTEVEDL (173 aa)) form the tr-type G domain. The G1 stretch occupies residues 614–621 (GHVDHGKT). 614 to 621 (GHVDHGKT) contributes to the GTP binding site. The interval 639-643 (GITQH) is G2. A G3 region spans residues 664–667 (DTPG). Residues 664-668 (DTPGH) and 718-721 (NKID) contribute to the GTP site. Residues 718–721 (NKID) form a G4 region. The G5 stretch occupies residues 754–756 (SAI).

The protein belongs to the TRAFAC class translation factor GTPase superfamily. Classic translation factor GTPase family. IF-2 subfamily.

The protein localises to the cytoplasm. One of the essential components for the initiation of protein synthesis. Protects formylmethionyl-tRNA from spontaneous hydrolysis and promotes its binding to the 30S ribosomal subunits. Also involved in the hydrolysis of GTP during the formation of the 70S ribosomal complex. The sequence is that of Translation initiation factor IF-2 from Prochlorococcus marinus (strain MIT 9211).